The primary structure comprises 194 residues: Fibroblast growth factor 7 (194 aa).

An N-terminal signal peptide occupies residues 1-31 (MRKWILTWILPSLLYRSCFHIICLVGTISLA). Asn45 is a glycosylation site (N-linked (GlcNAc...) asparagine).

This sequence belongs to the heparin-binding growth factors family. Interacts with FGFBP1. Interacts with FGFR2. Affinity between fibroblast growth factors (FGFs) and their receptors is increased by heparan sulfate glycosaminoglycans that function as coreceptors.

It localises to the secreted. Functionally, plays an important role in the regulation of embryonic development, cell proliferation and cell differentiation. Required for normal branching morphogenesis. Growth factor active on keratinocytes. Possible major paracrine effector of normal epithelial cell proliferation. The polypeptide is Fibroblast growth factor 7 (FGF7) (Cervus elaphus (Red deer)).